We begin with the raw amino-acid sequence, 91 residues long: Small ribosomal subunit protein uS19 (91 aa).

The protein belongs to the universal ribosomal protein uS19 family.

Protein S19 forms a complex with S13 that binds strongly to the 16S ribosomal RNA. This is Small ribosomal subunit protein uS19 from Afipia carboxidovorans (strain ATCC 49405 / DSM 1227 / KCTC 32145 / OM5) (Oligotropha carboxidovorans).